Consider the following 221-residue polypeptide: Enolase-phosphatase E1 (221 aa).

The protein belongs to the HAD-like hydrolase superfamily. MasA/MtnC family. Monomer. It depends on Mg(2+) as a cofactor.

The catalysed reaction is 5-methylsulfanyl-2,3-dioxopentyl phosphate + H2O = 1,2-dihydroxy-5-(methylsulfanyl)pent-1-en-3-one + phosphate. The protein operates within amino-acid biosynthesis; L-methionine biosynthesis via salvage pathway; L-methionine from S-methyl-5-thio-alpha-D-ribose 1-phosphate: step 3/6. It functions in the pathway amino-acid biosynthesis; L-methionine biosynthesis via salvage pathway; L-methionine from S-methyl-5-thio-alpha-D-ribose 1-phosphate: step 4/6. Functionally, bifunctional enzyme that catalyzes the enolization of 2,3-diketo-5-methylthiopentyl-1-phosphate (DK-MTP-1-P) into the intermediate 2-hydroxy-3-keto-5-methylthiopentenyl-1-phosphate (HK-MTPenyl-1-P), which is then dephosphorylated to form the acireductone 1,2-dihydroxy-3-keto-5-methylthiopentene (DHK-MTPene). This Xanthobacter autotrophicus (strain ATCC BAA-1158 / Py2) protein is Enolase-phosphatase E1.